We begin with the raw amino-acid sequence, 1735 residues long: Glutamine and serine-rich protein 1 (1735 aa).

Position 1 is an N-acetylmethionine (Met-1). The span at Ala-267–Pro-297 shows a compositional bias: polar residues. Disordered stretches follow at residues Ala-267–Ile-301, Thr-414–Thr-440, Ser-479–Ala-518, and Leu-533–Glu-561. A compositionally biased stretch (low complexity) spans Leu-417–Thr-440. Phosphoserine occurs at positions 586, 615, and 886. Position 949 is a phosphothreonine (Thr-949). Residues Gly-964 to Gly-1033 are disordered. Over residues Glu-971–Leu-985 the composition is skewed to polar residues. The residue at position 987 (Ser-987) is a Phosphoserine. The segment covering Ser-997–Glu-1024 has biased composition (polar residues). Glycyl lysine isopeptide (Lys-Gly) (interchain with G-Cter in SUMO2) cross-links involve residues Lys-1058 and Lys-1083. 2 disordered regions span residues Lys-1073–Arg-1132 and Arg-1178–Asp-1217. The segment covering Ser-1120–Arg-1132 has biased composition (basic and acidic residues). Residues Ser-1211, Ser-1230, Ser-1231, and Ser-1239 each carry the phosphoserine modification. A disordered region spans residues Thr-1256–Thr-1286. Over residues Ala-1269–Thr-1286 the composition is skewed to low complexity. Thr-1341 is modified (phosphothreonine). Ser-1348 bears the Phosphoserine mark. A disordered region spans residues Val-1441–Pro-1532. Positions Lys-1449–Thr-1478 are enriched in polar residues. Over residues Val-1492–Phe-1508 the composition is skewed to basic and acidic residues.

As to quaternary structure, interacts with TET1.

The protein resides in the chromosome. Functionally, plays an essential role in the protection and maintenance of transcriptional and developmental programs. Protects many bivalent promoters and poised enhancers from hypermethylation, showing a marked preference for these regulatory elements over other types of promoters or enhancers. Mechanistically, cooperates with TET1 and binds to DNA in a common complex to inhibit the binding of DNMT3A/3B and therefore de novo methylation. The polypeptide is Glutamine and serine-rich protein 1 (QSER1) (Homo sapiens (Human)).